The sequence spans 1163 residues: Guanylate cyclase 32E (1163 aa).

A signal peptide spans methionine 1–serine 25. At alanine 29 to arginine 469 the chain is on the extracellular side. Residues asparagine 147, asparagine 206, asparagine 368, and asparagine 390 are each glycosylated (N-linked (GlcNAc...) asparagine). A helical transmembrane segment spans residues tyrosine 470–lysine 490. Residues histidine 491 to leucine 1163 lie on the Cytoplasmic side of the membrane. Positions methionine 507–glutamate 800 constitute a Protein kinase domain. In terms of domain architecture, Guanylate cyclase spans threonine 873–glutamate 1003.

The protein belongs to the adenylyl cyclase class-4/guanylyl cyclase family.

The protein resides in the membrane. The enzyme catalyses GTP = 3',5'-cyclic GMP + diphosphate. The chain is Guanylate cyclase 32E (Gyc32E) from Drosophila melanogaster (Fruit fly).